Consider the following 571-residue polypeptide: MPTISRQEYVGLFGPTTGDKIRLGDTNLFIEIEKDLRGYGDESVYGGGKSLRDGMGADNRMTSENILDLVITSVTILDARQGVIKADVGIKGGRIVGIGKSGNPNMMNGVTPGMVVGVSTDAISGEHLILTAAGIDTHIHFISPQQVEHALSNGVTTFFGGGVGPTDGTNGTTVTAGPWHIHRMLRAFESLPVNVGILGKGHAAVAMPLVEQIKAGVAGLKVHEDWGATNSALRNALRVADEMDIQVAVHTDSLNEGGYVEDTIDAFEGRTIHTFHTEGAGGGHAPDIIKVASQMNVLPSSTNPTLPYGINSQAELFDMIMVCHNLNPKVPADVAFSESRVRPETIAAENVLHDMGVLSMFSSDSQAMGRVGENWLRVMQTAHAMKAARGKLPEDAAHNDNFRVLRYVAKITINPAIAQGISHVLGSVEVGKMADLVLWEPRFFGVKPKLVIKGGMINWAVMGDPNASLPTPQPTFYRPMFGALGKTLQETCVTFVSQAAMELGVKESLGLERQVMAVHNCRAISKKDMVRNAETPTIEVDAETFAVRVNGEYATVKPVRTVALNQRYFFS.

Residues 133–571 (AGIDTHIHFI…VALNQRYFFS (439 aa)) form the Urease domain. Ni(2+) is bound by residues H138, H140, and K221. K221 carries the post-translational modification N6-carboxylysine. Residue H223 participates in substrate binding. Ni(2+) contacts are provided by H250 and H276. H324 serves as the catalytic Proton donor. D364 contributes to the Ni(2+) binding site.

This sequence belongs to the metallo-dependent hydrolases superfamily. Urease alpha subunit family. Heterotrimer of UreA (gamma), UreB (beta) and UreC (alpha) subunits. Three heterotrimers associate to form the active enzyme. The cofactor is Ni cation. In terms of processing, carboxylation allows a single lysine to coordinate two nickel ions.

The protein resides in the cytoplasm. The catalysed reaction is urea + 2 H2O + H(+) = hydrogencarbonate + 2 NH4(+). It functions in the pathway nitrogen metabolism; urea degradation; CO(2) and NH(3) from urea (urease route): step 1/1. The sequence is that of Urease subunit alpha from Photorhabdus laumondii subsp. laumondii (strain DSM 15139 / CIP 105565 / TT01) (Photorhabdus luminescens subsp. laumondii).